The sequence spans 191 residues: FMN-dependent NADH:quinone oxidoreductase 1 (191 aa).

FMN is bound by residues S10 and 16-18 (SVS).

It belongs to the azoreductase type 1 family. In terms of assembly, homodimer. FMN serves as cofactor.

The catalysed reaction is 2 a quinone + NADH + H(+) = 2 a 1,4-benzosemiquinone + NAD(+). It carries out the reaction N,N-dimethyl-1,4-phenylenediamine + anthranilate + 2 NAD(+) = 2-(4-dimethylaminophenyl)diazenylbenzoate + 2 NADH + 2 H(+). In terms of biological role, quinone reductase that provides resistance to thiol-specific stress caused by electrophilic quinones. Functionally, also exhibits azoreductase activity. Catalyzes the reductive cleavage of the azo bond in aromatic azo compounds to the corresponding amines. The chain is FMN-dependent NADH:quinone oxidoreductase 1 from Jannaschia sp. (strain CCS1).